We begin with the raw amino-acid sequence, 248 residues long: MNVLISNDDGYLSEGIAVLARVTAEFANVRVVAPERDRSGVSNSLTLERPLQLKQAQNGFYYVNGTPTDCIHIGQSVFSDFQADFVFSGINRGANMGDDTLYSGTVAAATEAYLMGIPAVAFSLNDASGRYWATAEKALWTLLAHFFKNPPQSPILWNINIPAVEPEDVRGIKIARLGRRHHGQNVIPARNPRGEQIYWIGPVGRVSDKEEGTDFGECGAGFITVTPLQIDLTAYPDMAETAAFWHAD.

D8, D9, S39, and N91 together coordinate a divalent metal cation.

This sequence belongs to the SurE nucleotidase family. The cofactor is a divalent metal cation.

The protein resides in the cytoplasm. It catalyses the reaction a ribonucleoside 5'-phosphate + H2O = a ribonucleoside + phosphate. Its function is as follows. Nucleotidase that shows phosphatase activity on nucleoside 5'-monophosphates. In Neisseria meningitidis serogroup C / serotype 2a (strain ATCC 700532 / DSM 15464 / FAM18), this protein is 5'-nucleotidase SurE.